Reading from the N-terminus, the 360-residue chain is Peptide chain release factor 1 (360 aa).

Gln235 carries the post-translational modification N5-methylglutamine. Positions 284-304 (KVDSERSADRKSQVGSGDRSE) are disordered.

The protein belongs to the prokaryotic/mitochondrial release factor family. In terms of processing, methylated by PrmC. Methylation increases the termination efficiency of RF1.

Its subcellular location is the cytoplasm. Functionally, peptide chain release factor 1 directs the termination of translation in response to the peptide chain termination codons UAG and UAA. In Agrobacterium fabrum (strain C58 / ATCC 33970) (Agrobacterium tumefaciens (strain C58)), this protein is Peptide chain release factor 1.